Here is a 597-residue protein sequence, read N- to C-terminus: Cytosolic phospholipase A2 gamma (597 aa).

The region spanning 1-597 (MELSSGVCPA…FKKSHNISKD (597 aa)) is the PLA2c domain. The Nucleophile role is filled by S83. Catalysis depends on D417, which acts as the Proton acceptor. The disordered stretch occupies residues 576-597 (RVKDPQGSQTVEFKKSHNISKD). Positions 587–597 (EFKKSHNISKD) are enriched in basic and acidic residues.

Highly expressed in ovary, where it localizes to oocytes in preantral and antral stage follicles (at protein level). Not detected in other tissues tested.

The protein localises to the nucleus. It is found in the nucleoplasm. The protein resides in the nucleus envelope. Its subcellular location is the cytoplasm. It localises to the cell cortex. The protein localises to the cytoskeleton. It is found in the spindle. It carries out the reaction a 1,2-diacyl-sn-glycero-3-phosphocholine + H2O = a 1-acyl-sn-glycero-3-phosphocholine + a fatty acid + H(+). The enzyme catalyses a 1-O-alkyl-2-acyl-sn-glycero-3-phosphocholine + H2O = a 1-O-alkyl-sn-glycero-3-phosphocholine + a fatty acid + H(+). It catalyses the reaction 1,2-dihexadecanoyl-sn-glycero-3-phosphocholine + H2O = 1-hexadecanoyl-sn-glycero-3-phosphocholine + hexadecanoate + H(+). The catalysed reaction is 1-hexadecanoyl-2-(9Z-octadecenoyl)-sn-glycero-3-phosphocholine + H2O = 1-hexadecanoyl-sn-glycero-3-phosphocholine + (9Z)-octadecenoate + H(+). It carries out the reaction 1-hexadecanoyl-2-(9Z,12Z-octadecadienoyl)-sn-glycero-3-phosphocholine + H2O = (9Z,12Z)-octadecadienoate + 1-hexadecanoyl-sn-glycero-3-phosphocholine + H(+). The enzyme catalyses 1-hexadecanoyl-2-(5Z,8Z,11Z,14Z-eicosatetraenoyl)-sn-glycero-3-phosphocholine + H2O = 1-hexadecanoyl-sn-glycero-3-phosphocholine + (5Z,8Z,11Z,14Z)-eicosatetraenoate + H(+). It catalyses the reaction 1-O-hexadecyl-2-(5Z,8Z,11Z,14Z)-eicosatetraenoyl-sn-glycero-3-phosphocholine + H2O = 1-O-hexadecyl-sn-glycero-3-phosphocholine + (5Z,8Z,11Z,14Z)-eicosatetraenoate + H(+). The catalysed reaction is 1-hexadecanoyl-2-(5Z,8Z,11Z,14Z-eicosatetraenoyl)-sn-glycero-3-phosphocholine + H2O = 2-(5Z,8Z,11Z,14Z)-eicosatetraenoyl-sn-glycero-3-phosphocholine + hexadecanoate + H(+). It carries out the reaction a 1-acyl-sn-glycero-3-phosphocholine + H2O = sn-glycerol 3-phosphocholine + a fatty acid + H(+). The enzyme catalyses 1-hexadecanoyl-sn-glycero-3-phosphocholine + H2O = sn-glycerol 3-phosphocholine + hexadecanoate + H(+). It catalyses the reaction 2 1-hexadecanoyl-sn-glycero-3-phosphocholine = 1,2-dihexadecanoyl-sn-glycero-3-phosphocholine + sn-glycerol 3-phosphocholine. The catalysed reaction is 1-hexadecanoyl-sn-glycero-3-phosphoethanolamine + 1-hexadecanoyl-sn-glycero-3-phosphocholine = 1,2-dihexadecanoyl-sn-glycero-3-phosphoethanolamine + sn-glycerol 3-phosphocholine. It carries out the reaction 1-hexadecanoyl-sn-glycero-3-phosphoethanolamine + 1-hexadecanoyl-sn-glycero-3-phosphocholine = sn-glycero-3-phosphoethanolamine + 1,2-dihexadecanoyl-sn-glycero-3-phosphocholine. The enzyme catalyses 2 1-hexadecanoyl-sn-glycero-3-phosphoethanolamine = 1,2-dihexadecanoyl-sn-glycero-3-phosphoethanolamine + sn-glycero-3-phosphoethanolamine. It catalyses the reaction 1-O-hexadecyl-sn-glycero-3-phosphocholine + 1-hexadecanoyl-sn-glycero-3-phosphocholine = 1-O-hexadecyl-2-hexadecanoyl-sn-glycero-3-phosphocholine + sn-glycerol 3-phosphocholine. The catalysed reaction is a 1-O-(1Z-alkenyl)-sn-glycero-3-phosphoethanolamine + 1-hexadecanoyl-sn-glycero-3-phosphocholine = 1-O-(1Z)-alkenyl-2-hexadecanoyl-sn-glycero-3-phosphoethanolamine + sn-glycerol 3-phosphocholine. It carries out the reaction 1-O-hexadecyl-sn-glycero-3-phosphocholine + 1-hexadecanoyl-sn-glycero-3-phosphoethanolamine = 1-O-hexadecyl-2-hexadecanoyl-sn-glycero-3-phosphocholine + sn-glycero-3-phosphoethanolamine. The enzyme catalyses 1-octadecanoyl-2-(5Z,8Z,11Z,14Z)-eicosatetraenoyl-sn-glycero-3-phosphoethanolamine + 1-hexadecanoyl-sn-glycero-3-phosphocholine = 1-octadecanoyl-sn-glycero-3-phosphoethanolamine + 1-hexadecanoyl-2-(5Z,8Z,11Z,14Z-eicosatetraenoyl)-sn-glycero-3-phosphocholine. It catalyses the reaction 1-octadecanoyl-2-(5Z,8Z,11Z,14Z)-eicosatetraenoyl-sn-glycero-3-phosphoethanolamine + 1-O-hexadecyl-sn-glycero-3-phosphocholine = 1-octadecanoyl-sn-glycero-3-phosphoethanolamine + 1-O-hexadecyl-2-(5Z,8Z,11Z,14Z)-eicosatetraenoyl-sn-glycero-3-phosphocholine. The catalysed reaction is 1-hexadecanoyl-2-(9Z,12Z-octadecadienoyl)-sn-glycero-3-phosphocholine + a 1-O-(1Z-alkenyl)-sn-glycero-3-phosphoethanolamine = 1-O-(1Z-alkenyl)-2-(9Z,12Z-octadecadienoyl)-sn-glycero-3-phosphoethanolamine + 1-hexadecanoyl-sn-glycero-3-phosphocholine. It carries out the reaction 1-hexadecanoyl-2-(5Z,8Z,11Z,14Z-eicosatetraenoyl)-sn-glycero-3-phosphocholine + a 1-O-(1Z-alkenyl)-sn-glycero-3-phosphoethanolamine = 1-O-(1Z)-alkenyl-2-(5Z,8Z,11Z,14Z)-eicosatetraenoyl-sn-glycero-3-phosphoethanolamine + 1-hexadecanoyl-sn-glycero-3-phosphocholine. Its function is as follows. Calcium-independent phospholipase, lysophospholipase and O-acyltransferase involved in phospholipid remodeling. Preferentially hydrolyzes the ester bond of the fatty acyl group attached at sn-2 position of phospholipids with choline and ethanolamine head groups, producing lysophospholipids that are used in deacylation-reacylation cycles. Transfers the sn-1 fatty acyl from one lysophospholipid molecule to the sn-2 position of another lysophospholipid to form diacyl, alkylacyl and alkenylacyl glycerophospholipids. Cleaves ester bonds but not alkyl or alkenyl ether bonds at the sn-1 position of lysophospholipids. Catalyzes sn-2 fatty acyl transfer from phospholipids to the sn-2 position of 1-O-alkyl or 1-O-alkenyl lysophospholipids with lower efficiency. This Mus musculus (Mouse) protein is Cytosolic phospholipase A2 gamma.